Consider the following 183-residue polypeptide: NADH-quinone oxidoreductase subunit I (183 aa).

4Fe-4S ferredoxin-type domains lie at 71-100 and 117-146; these read KRDE…MKAA and EIYE…LTTS. 8 residues coordinate [4Fe-4S] cluster: Cys80, Cys83, Cys86, Cys90, Cys126, Cys129, Cys132, and Cys136.

The protein belongs to the complex I 23 kDa subunit family. NDH-1 is composed of 14 different subunits. Subunits NuoA, H, J, K, L, M, N constitute the membrane sector of the complex. [4Fe-4S] cluster serves as cofactor.

Its subcellular location is the cell inner membrane. The enzyme catalyses a quinone + NADH + 5 H(+)(in) = a quinol + NAD(+) + 4 H(+)(out). NDH-1 shuttles electrons from NADH, via FMN and iron-sulfur (Fe-S) centers, to quinones in the respiratory chain. The immediate electron acceptor for the enzyme in this species is believed to be ubiquinone. Couples the redox reaction to proton translocation (for every two electrons transferred, four hydrogen ions are translocated across the cytoplasmic membrane), and thus conserves the redox energy in a proton gradient. The sequence is that of NADH-quinone oxidoreductase subunit I from Flavobacterium psychrophilum (strain ATCC 49511 / DSM 21280 / CIP 103535 / JIP02/86).